Here is a 394-residue protein sequence, read N- to C-terminus: Phosphoglycerate kinase (394 aa).

Substrate contacts are provided by residues 21-23, Arg36, 59-62, Arg118, and Arg151; these read DFN and HLGR. Ser183 carries the post-translational modification Phosphoserine. Residues Lys201 and Gly292 each coordinate ATP. A Phosphothreonine modification is found at Thr299. ATP contacts are provided by residues Glu323 and 350–353; that span reads GGDS.

The protein belongs to the phosphoglycerate kinase family. In terms of assembly, monomer.

It localises to the cytoplasm. It catalyses the reaction (2R)-3-phosphoglycerate + ATP = (2R)-3-phospho-glyceroyl phosphate + ADP. It functions in the pathway carbohydrate degradation; glycolysis; pyruvate from D-glyceraldehyde 3-phosphate: step 2/5. In Bacillus cereus (strain Q1), this protein is Phosphoglycerate kinase.